The chain runs to 467 residues: Trigger factor (467 aa).

One can recognise a PPIase FKBP-type domain in the interval Ser-174–Pro-261. Residues Pro-439–Pro-467 are disordered. The segment covering Lys-457–Pro-467 has biased composition (basic and acidic residues).

It belongs to the FKBP-type PPIase family. Tig subfamily.

It localises to the cytoplasm. It catalyses the reaction [protein]-peptidylproline (omega=180) = [protein]-peptidylproline (omega=0). Its function is as follows. Involved in protein export. Acts as a chaperone by maintaining the newly synthesized protein in an open conformation. Functions as a peptidyl-prolyl cis-trans isomerase. This Prochlorococcus marinus (strain SARG / CCMP1375 / SS120) protein is Trigger factor.